A 252-amino-acid polypeptide reads, in one-letter code: Triosephosphate isomerase (252 aa).

Position 10 to 12 (10 to 12) interacts with substrate; that stretch reads NWK. Histidine 96 acts as the Electrophile in catalysis. Catalysis depends on glutamate 168, which acts as the Proton acceptor. Substrate-binding positions include glycine 174, serine 214, and 235-236; that span reads GG.

It belongs to the triosephosphate isomerase family. Homodimer.

It localises to the cytoplasm. The enzyme catalyses D-glyceraldehyde 3-phosphate = dihydroxyacetone phosphate. Its pathway is carbohydrate biosynthesis; gluconeogenesis. The protein operates within carbohydrate degradation; glycolysis; D-glyceraldehyde 3-phosphate from glycerone phosphate: step 1/1. Functionally, involved in the gluconeogenesis. Catalyzes stereospecifically the conversion of dihydroxyacetone phosphate (DHAP) to D-glyceraldehyde-3-phosphate (G3P). This chain is Triosephosphate isomerase, found in Streptococcus pyogenes serotype M6 (strain ATCC BAA-946 / MGAS10394).